The following is a 106-amino-acid chain: Small ribosomal subunit protein uS10 (106 aa).

It belongs to the universal ribosomal protein uS10 family. In terms of assembly, part of the 30S ribosomal subunit.

Involved in the binding of tRNA to the ribosomes. The protein is Small ribosomal subunit protein uS10 of Caldicellulosiruptor bescii (strain ATCC BAA-1888 / DSM 6725 / KCTC 15123 / Z-1320) (Anaerocellum thermophilum).